A 276-amino-acid polypeptide reads, in one-letter code: NH(3)-dependent NAD(+) synthetase (276 aa).

43–50 lines the ATP pocket; sequence GISGGVDS. Asp49 lines the Mg(2+) pocket. Arg146 serves as a coordination point for deamido-NAD(+). Thr166 is an ATP binding site. A Mg(2+)-binding site is contributed by Glu171. Residues Lys179 and Asp186 each contribute to the deamido-NAD(+) site. The ATP site is built by Lys195 and Thr217. Deamido-NAD(+) is bound at residue 266–267; the sequence is HK.

Belongs to the NAD synthetase family. As to quaternary structure, homodimer.

The catalysed reaction is deamido-NAD(+) + NH4(+) + ATP = AMP + diphosphate + NAD(+) + H(+). It functions in the pathway cofactor biosynthesis; NAD(+) biosynthesis; NAD(+) from deamido-NAD(+) (ammonia route): step 1/1. Functionally, catalyzes the ATP-dependent amidation of deamido-NAD to form NAD. Uses ammonia as a nitrogen source. This chain is NH(3)-dependent NAD(+) synthetase, found in Shewanella halifaxensis (strain HAW-EB4).